The chain runs to 97 residues: Co-chaperonin GroES (97 aa).

The protein belongs to the GroES chaperonin family. In terms of assembly, heptamer of 7 subunits arranged in a ring. Interacts with the chaperonin GroEL.

It localises to the cytoplasm. In terms of biological role, together with the chaperonin GroEL, plays an essential role in assisting protein folding. The GroEL-GroES system forms a nano-cage that allows encapsulation of the non-native substrate proteins and provides a physical environment optimized to promote and accelerate protein folding. GroES binds to the apical surface of the GroEL ring, thereby capping the opening of the GroEL channel. The polypeptide is Co-chaperonin GroES (Baumannia cicadellinicola subsp. Homalodisca coagulata).